We begin with the raw amino-acid sequence, 488 residues long: F-box protein At3g60790 (488 aa).

The interval 1-21 is disordered; that stretch reads MTTQSSSSSSSLPSSLSSTPP. In terms of domain architecture, F-box spans 49 to 95; sequence VDRISMLPDEMLQKILSTLSTKDAVITSTLSKRWVDQWKRIPHLCVD.

In Arabidopsis thaliana (Mouse-ear cress), this protein is F-box protein At3g60790.